The chain runs to 549 residues: Formate--tetrahydrofolate ligase (549 aa).

Position 60–67 (Thr-60–Thr-67) interacts with ATP.

Belongs to the formate--tetrahydrofolate ligase family.

It catalyses the reaction (6S)-5,6,7,8-tetrahydrofolate + formate + ATP = (6R)-10-formyltetrahydrofolate + ADP + phosphate. It participates in one-carbon metabolism; tetrahydrofolate interconversion. In Campylobacter concisus (strain 13826), this protein is Formate--tetrahydrofolate ligase.